The sequence spans 242 residues: U1 small nuclear ribonucleoprotein C (242 aa).

Residues 3–35 form a Matrin-type; degenerate zinc finger; that stretch reads YLGDYCDVYLTHDSMSVRKAHNSGRNHLRNVVE. The tract at residues 60 to 242 is disordered; it reads GQASSNPMLQ…SSPGPSQEGK (183 aa). Pro residues-rich tracts occupy residues 90 to 107, 136 to 149, 156 to 183, and 201 to 213; these read MLPP…PGAP, PPMP…PLPN, PFPP…PPIP, and PVPP…PGAP. Residues 231–242 show a composition bias toward polar residues; the sequence is PASSPGPSQEGK.

The protein belongs to the U1 small nuclear ribonucleoprotein C family. In terms of assembly, U1 snRNP is composed of the 7 core Sm proteins B/B', D1, D2, D3, E, F and G that assemble in a heptameric protein ring on the Sm site of the small nuclear RNA to form the core snRNP, and at least 3 U1 snRNP-specific proteins U1-70K, U1-A and U1-C. U1-C interacts with U1 snRNA and the 5' splice-site region of the pre-mRNA.

The protein resides in the nucleus. In terms of biological role, component of the spliceosomal U1 snRNP, which is essential for recognition of the pre-mRNA 5' splice-site and the subsequent assembly of the spliceosome. U1-C is directly involved in initial 5' splice-site recognition for both constitutive and regulated alternative splicing. The interaction with the 5' splice-site seems to precede base-pairing between the pre-mRNA and the U1 snRNA. Stimulates commitment or early (E) complex formation by stabilizing the base pairing of the 5' end of the U1 snRNA and the 5' splice-site region. The polypeptide is U1 small nuclear ribonucleoprotein C (Ajellomyces capsulatus (strain G186AR / H82 / ATCC MYA-2454 / RMSCC 2432) (Darling's disease fungus)).